Consider the following 247-residue polypeptide: Leucyl/phenylalanyl-tRNA--protein transferase (247 aa).

This sequence belongs to the L/F-transferase family.

The protein resides in the cytoplasm. It carries out the reaction N-terminal L-lysyl-[protein] + L-leucyl-tRNA(Leu) = N-terminal L-leucyl-L-lysyl-[protein] + tRNA(Leu) + H(+). The catalysed reaction is N-terminal L-arginyl-[protein] + L-leucyl-tRNA(Leu) = N-terminal L-leucyl-L-arginyl-[protein] + tRNA(Leu) + H(+). The enzyme catalyses L-phenylalanyl-tRNA(Phe) + an N-terminal L-alpha-aminoacyl-[protein] = an N-terminal L-phenylalanyl-L-alpha-aminoacyl-[protein] + tRNA(Phe). In terms of biological role, functions in the N-end rule pathway of protein degradation where it conjugates Leu, Phe and, less efficiently, Met from aminoacyl-tRNAs to the N-termini of proteins containing an N-terminal arginine or lysine. This Solidesulfovibrio magneticus (strain ATCC 700980 / DSM 13731 / RS-1) (Desulfovibrio magneticus) protein is Leucyl/phenylalanyl-tRNA--protein transferase.